The following is a 599-amino-acid chain: CAP-Gly domain-containing linker protein 4 (599 aa).

ANK repeat units lie at residues 65-101 (TSVSELFAILRQWVPQVQQNIDIIGNEILKRGCNVND), 149-180 (TNMNALHYASYFDVPELIRVLLKTSKPKDVDA), and 186-215 (NFGTALHIAAHNLCAGAVKTLLELGANPAF). In terms of domain architecture, CAP-Gly 1 spans 303-345 (GTTEFASGQWAGIELDEPEGKNNGSVGRVQYFKCAPKYGIFAP). Positions 387–482 (SGLMTSKKEN…TSAANNTHRE (96 aa)) are disordered. Low complexity predominate over residues 443–462 (LSTSSSSGKKTLSKSPSLPS). Residues 468-478 (LKSSTTSAANN) are compositionally biased toward polar residues. Residues 505–547 (GTTNFAPGYWYGIELEKPHGKNDGSVGGVQYFSCSPRYGIFAP) form the CAP-Gly 2 domain. Phosphoserine is present on Ser557. The interval 565–599 (SSNKQNHSYPGFRRSFSTTSASSQKEINRRNAFAK) is disordered. The span at 576-587 (FRRSFSTTSASS) shows a compositional bias: low complexity.

In Rattus norvegicus (Rat), this protein is CAP-Gly domain-containing linker protein 4 (Clip4).